We begin with the raw amino-acid sequence, 304 residues long: tRNA-uridine aminocarboxypropyltransferase 1 (304 aa).

Ser-2 carries the N-acetylserine modification. Residues 206–209 carry the DXTW motif; that stretch reads DSTW.

It belongs to the TDD superfamily. DTWD1 family.

It is found in the nucleus. It catalyses the reaction a uridine in tRNA + S-adenosyl-L-methionine = a 3-[(3S)-3-amino-3-carboxypropyl]uridine in tRNA + S-methyl-5'-thioadenosine + H(+). Functionally, catalyzes the formation of 3-(3-amino-3-carboxypropyl)uridine (acp3U) at position 20 in the D-loop of several cytoplasmic tRNAs (acp3U(20)). The polypeptide is tRNA-uridine aminocarboxypropyltransferase 1 (Pongo abelii (Sumatran orangutan)).